Here is a 231-residue protein sequence, read N- to C-terminus: Heptaprenylglyceryl phosphate synthase (231 aa).

Residue lysine 12 coordinates sn-glycerol 1-phosphate. Mg(2+)-binding residues include aspartate 14 and threonine 40. Sn-glycerol 1-phosphate is bound by residues 159-164 (YMEYSG), glycine 189, and 209-210 (GN).

It belongs to the GGGP/HepGP synthase family. Group I subfamily. In terms of assembly, homodimer. Mg(2+) is required as a cofactor.

The enzyme catalyses sn-glycerol 1-phosphate + all-trans-heptaprenyl diphosphate = 3-heptaprenyl-sn-glycero-1-phosphate + diphosphate. Its pathway is membrane lipid metabolism; glycerophospholipid metabolism. In terms of biological role, prenyltransferase that catalyzes in vivo the transfer of the heptaprenyl moiety of heptaprenyl pyrophosphate (HepPP; 35 carbon atoms) to the C3 hydroxyl of sn-glycerol-1-phosphate (G1P), producing heptaprenylglyceryl phosphate (HepGP). This reaction is an ether-bond-formation step in the biosynthesis of archaea-type G1P-based membrane lipids found in Bacillales. This is Heptaprenylglyceryl phosphate synthase from Anoxybacillus flavithermus (strain DSM 21510 / WK1).